The following is a 398-amino-acid chain: Isochorismate synthase DhbC (398 aa).

Position 271 is a phosphoserine (Ser-271).

Belongs to the isochorismate synthase family.

It carries out the reaction chorismate = isochorismate. It participates in siderophore biosynthesis; bacillibactin biosynthesis. This chain is Isochorismate synthase DhbC (dhbC), found in Bacillus subtilis (strain 168).